The primary structure comprises 778 residues: Kin of IRRE-like protein 3 (778 aa).

The first 21 residues, 1 to 21 (MKPFQLDLLFVCFFLFSQELG), serve as a signal peptide directing secretion. Over 22 to 535 (LQKRGCCLVL…GLEAESVPMA (514 aa)) the chain is Extracellular. Ig-like C2-type domains follow at residues 48-142 (YSFS…ARLT), 147-243 (PDDP…TSVT), 249-330 (PPLV…RTVD), 335-415 (PRMT…VTLT), and 419-515 (PPII…IRLK). A disulfide bridge connects residues Cys-69 and Cys-127. An N-linked (GlcNAc...) asparagine glycan is attached at Asn-167. The cysteines at positions 170 and 227 are disulfide-linked. N-linked (GlcNAc...) asparagine glycosylation occurs at Asn-253. Cys-271 and Cys-314 form a disulfide bridge. Asn-324 carries N-linked (GlcNAc...) asparagine glycosylation. Cystine bridges form between Cys-356/Cys-398 and Cys-440/Cys-499. A glycan (N-linked (GlcNAc...) asparagine) is linked at Asn-498. Residues 536 to 556 (VIIGVAVGAGVAFLVLMATIV) form a helical membrane-spanning segment. The Cytoplasmic segment spans residues 557-778 (AFCCARSQRN…PLQRRMQTHV (222 aa)). Residues 727-736 (CDSSVSSSGK) are compositionally biased toward polar residues. The segment at 727–778 (CDSSVSSSGKQDGYVQFDKASKASASSSHHSQSSSQNSDPSRPLQRRMQTHV) is disordered. A compositionally biased stretch (low complexity) spans 748 to 762 (KASASSSHHSQSSSQ).

The protein belongs to the immunoglobulin superfamily. As to quaternary structure, homodimer; mediates homophilic interactions to promote cell adhesion. Interacts with NPHS1; forms heterodimers with NPHS1. Interacts with NPHS2/podocin (via the C-terminus). Interacts with CASK. Interacts (via extracellular region) with MAP1B. Interacts (via extracellular region) with MYO16. Interacts (via intracellular region) with ATP1B1. Interacts (via intracellular region) with SHMT2. Interacts (via intracellular region) with UFC1. Post-translationally, undergoes proteolysis by a metalloprotease and gives rise to a soluble form. Expressed in fetal and adult brain. Also expressed in kidney, specifically in podocytes of kidney glomeruli. Also expressed in skeletal muscle.

It localises to the cell membrane. It is found in the secreted. Synaptic adhesion molecule required for the formation of target-specific synapses. Required for formation of target-specific synapses at hippocampal mossy fiber synapses. Required for formation of mossy fiber filopodia, the synaptic structures connecting dentate granule and GABA neurons. Probably acts as a homophilic adhesion molecule that promotes trans-cellular interactions and stabilize mossy fiber filipodia contact and subsequent synapse formation. Required for the coalescence of vomeronasal sensory neuron axons. May be involved in the hematopoietic supportive capacity of stroma cells; the secreted extracellular domain is directly responsible for supporting hematopoietic stem cells. The sequence is that of Kin of IRRE-like protein 3 from Homo sapiens (Human).